The primary structure comprises 608 residues: Zinc metalloproteinase-disintegrin-like agkihagin (608 aa).

A signal peptide spans 1-20 (MIQVLLVTICLAAFPYQGSS). Positions 21–189 (IILESGNVND…KKASQSNLTP (169 aa)) are excised as a propeptide. Positions 199–395 (KFVKLFLVAD…NMPQCILKKP (197 aa)) constitute a Peptidase M12B domain. 3 disulfide bridges follow: Cys310-Cys390, Cys350-Cys374, and Cys352-Cys357. Zn(2+) is bound at residue His335. The active site involves Glu336. Zn(2+) contacts are provided by His339 and His345. The Disintegrin domain occupies 403 to 488 (PPVCGNYFVE…ADCTDRFQKN (86 aa)). Positions 405, 408, 410, 412, 415, and 418 each coordinate Ca(2+). 14 cysteine pairs are disulfide-bonded: Cys406–Cys435, Cys417–Cys430, Cys419–Cys425, Cys429–Cys452, Cys443–Cys449, Cys448–Cys474, Cys461–Cys481, Cys468–Cys499, Cys492–Cys504, Cys511–Cys561, Cys526–Cys570, Cys539–Cys549, Cys556–Cys596, and Cys590–Cys601. The D/ECD-tripeptide signature appears at 467-469 (ECD). Ca(2+) contacts are provided by Asp469, Met470, Asp472, Asp483, and Arg484. Asn501 carries an N-linked (GlcNAc...) asparagine glycan.

This sequence belongs to the venom metalloproteinase (M12B) family. P-III subfamily. P-IIIc sub-subfamily. As to quaternary structure, homodimer; disulfide-linked. Requires Zn(2+) as cofactor. As to expression, expressed by the venom gland.

Its subcellular location is the secreted. Inhibited by EDTA and EGTA. Not inhibited by PMSF, antipain, pepstatin, and iodoacetamide. In terms of biological role, strongly inhibits the collagen-induced human platelet aggregation. Hydrolyzes the Aalpha-chain of fibrinogen (FGA), without cleavage of Bbeta- and gamma-chains. Induces apoptosis and strongly inhibits proliferation of endothelial cells as well as adhesion of the cells to extracellular matrix proteins. The polypeptide is Zinc metalloproteinase-disintegrin-like agkihagin (Deinagkistrodon acutus (Hundred-pace snake)).